The primary structure comprises 60 residues: Light-harvesting polypeptide B-885 alpha-2 chain (60 aa).

Over Ser1–Thr16 the chain is Cytoplasmic. The chain crosses the membrane as a helical span at residues Val17–Leu37. His33 is an a bacteriochlorophyll binding site. The Periplasmic segment spans residues Gly38–Ala60.

This sequence belongs to the antenna complex alpha subunit family. In terms of assembly, the core complex is formed by different alpha and beta chains, binding bacteriochlorophyll molecules, and arranged most probably in tetrameric structures disposed around the reaction center. The non-pigmented gamma chains may constitute additional components.

The protein localises to the cell inner membrane. Antenna complexes are light-harvesting systems, which transfer the excitation energy to the reaction centers. The polypeptide is Light-harvesting polypeptide B-885 alpha-2 chain (Rhodocyclus tenuis (Rhodospirillum tenue)).